The chain runs to 68 residues: Riparin-1.6 (68 aa).

Residues 1 to 15 (MKIIVFLAVLMLVSA) form the signal peptide. Positions 16–41 (QVCLVSAAEMEHSSDNELSSRDLVKR) are excised as a propeptide. An intrachain disulfide couples cysteine 47 to cysteine 53. Cysteine 53 is subject to Cysteine amide. Residues 57–68 (DIESSEGANGGE) constitute a propeptide that is removed on maturation.

In terms of tissue distribution, expressed by the skin glands.

It localises to the secreted. This Crinia riparia (Streambank froglet) protein is Riparin-1.6.